Here is a 140-residue protein sequence, read N- to C-terminus: uncharacterized protein (140 aa).

A glycan (N-linked (GlcNAc...) asparagine) is linked at N36. A helical membrane pass occupies residues L91–F107. Residues Q113–N122 show a composition bias toward polar residues. Residues Q113 to Q140 form a disordered region. Residues T131–Q140 show a composition bias toward acidic residues.

The protein resides in the endoplasmic reticulum membrane. This is an uncharacterized protein from Saccharomyces cerevisiae (strain ATCC 204508 / S288c) (Baker's yeast).